Here is a 167-residue protein sequence, read N- to C-terminus: Transmembrane protein 229B (167 aa).

The Cytoplasmic portion of the chain corresponds to 1–14; the sequence is MASAEPLTALSRWY. Residues 15-35 traverse the membrane as a helical segment; sequence LYAIHGYFCEVMFTAAWEFVV. The Extracellular portion of the chain corresponds to 36–40; that stretch reads NFNWK. A helical membrane pass occupies residues 41–61; sequence FPGVTSVWALFIYGTSILIVE. The Cytoplasmic segment spans residues 62-73; it reads RMYLRLRGRCPL. A helical membrane pass occupies residues 74–94; it reads LLRCLIYTLWTYLWEFTTGFI. Topologically, residues 95–111 are extracellular; that stretch reads LRQFNACPWDYSQFDFD. A helical membrane pass occupies residues 112–132; that stretch reads FMGLITLEYAVPWFCGALLVE. The Cytoplasmic portion of the chain corresponds to 133–167; that stretch reads QFVIRNTLRLRFDKDAEPGEPSGALALANGHVKTD.

It belongs to the TMEM229 family.

Its subcellular location is the membrane. In Bos taurus (Bovine), this protein is Transmembrane protein 229B (TMEM229B).